The following is a 244-amino-acid chain: 14-3-3 protein beta/alpha-1 (244 aa).

Met-1 bears the N-acetylmethionine mark.

It belongs to the 14-3-3 family. As to quaternary structure, homodimer, and heterodimer with other family members. As to expression, expressed in brain, gill, heart, intestine, kidney, liver, ovary, skin, spleen and testis.

It is found in the cytoplasm. In terms of biological role, adapter protein implicated in the regulation of a large spectrum of both general and specialized signaling pathways. Binds to a large number of partners, usually by recognition of a phosphoserine or phosphothreonine motif. Binding generally results in the modulation of the activity of the binding partner. This is 14-3-3 protein beta/alpha-1 from Oncorhynchus mykiss (Rainbow trout).